A 245-amino-acid chain; its full sequence is Cypemycin N-terminal methyltransferase (245 aa).

Belongs to the methyltransferase superfamily.

The catalysed reaction is N-terminal L-alanyl-[cypemycin] + 2 S-adenosyl-L-methionine = N-terminal N,N-dimethyl-L-alanyl-[cypemycin] + 2 S-adenosyl-L-homocysteine + 3 H(+). Involved in the biosynthesis of the lanaridin cypemycin. The enzyme can methylate a variety of oligopeptides, cyclic peptides and the epsilon-amino group of lysine. The sequence is that of Cypemycin N-terminal methyltransferase from Streptomyces sp.